The primary structure comprises 307 residues: Serine/threonine-protein phosphatase 4 catalytic subunit (307 aa).

Ala2 is subject to N-acetylalanine. Mn(2+)-binding residues include Asp54, His56, Asp82, and Asn114. His115 (proton donor) is an active-site residue. Positions 164 and 238 each coordinate Mn(2+). Leu307 carries the leucine methyl ester modification.

The protein belongs to the PPP phosphatase family. PP-4 (PP-X) subfamily. As to quaternary structure, serine/threonine-protein phosphatase 4 (PP4) occurs in different assemblies of the catalytic and one or more regulatory subunits. Component of the PP4 complexes PPP4C-PPP4R1, PPP4C-PPP4R2, PPP4C-PPP4R2-PPP4R3A, PPP4C-PPP4R2-PPP4R3B and PPP4C-PPP4R4. The PPP4C-PPP4R2 complex appears to be a tetramer composed of 2 molecules of PPP4C and 2 molecules of PPP4R2. Interacts with REL, NFKB1/p50 and RELA. Interacts with SMN1 and GEMIN4. Interacts with IRS4 (phosphorylated). Interacts with SMEK1/PPP4R3A; the interaction requires PP4R2. Interacts with HDAC3. Mn(2+) serves as cofactor. Methylation at the C-terminal Leu-307 is critical for interactions with regulatory subunits and functions in DNA repair.

The protein resides in the cytoplasm. Its subcellular location is the nucleus. The protein localises to the cytoskeleton. It is found in the microtubule organizing center. It localises to the centrosome. The enzyme catalyses O-phospho-L-seryl-[protein] + H2O = L-seryl-[protein] + phosphate. It carries out the reaction O-phospho-L-threonyl-[protein] + H2O = L-threonyl-[protein] + phosphate. Its function is as follows. Protein phosphatase that is involved in many processes such as microtubule organization at centrosomes, maturation of spliceosomal snRNPs, apoptosis, DNA repair, tumor necrosis factor (TNF)-alpha signaling, activation of c-Jun N-terminal kinase MAPK8, regulation of histone acetylation, DNA damage checkpoint signaling, NF-kappa-B activation and cell migration. The PPP4C-PPP4R1 PP4 complex may play a role in dephosphorylation and regulation of HDAC3. The PPP4C-PPP4R2-PPP4R3A PP4 complex specifically dephosphorylates H2AX phosphorylated on Ser-140 (gamma-H2AX) generated during DNA replication and required for DNA DSB repair. Dephosphorylates NDEL1 at CDK1 phosphorylation sites and negatively regulates CDK1 activity in interphase. In response to DNA damage, catalyzes RPA2 dephosphorylation, an essential step for DNA repair since it allows the efficient RPA2-mediated recruitment of RAD51 to chromatin. The chain is Serine/threonine-protein phosphatase 4 catalytic subunit (PPP4C) from Oryctolagus cuniculus (Rabbit).